The primary structure comprises 524 residues: MTNTLCLSLITLITLFISLTPTLIKSDEGIDVFLPISLNLTVLTDPFSISAASHDFGNITDENPGAVLCPSSTTEVARLLRFANGGFSYNKGSTSPASTFKVAARGQGHSLRGQASAPGGVVVNMTCLAMAAKPAAVVISADGTYADVAAGTMWVDVLKAAVDRGVSPVTWTDYLYLSVGGTLSNAGIGGQTFRHGPQISNVHELDVITGKGEMMTCSPKLNPELFYGVLGGLGQFGIITRARIALDHAPTRVKWSRILYSDFSAFKRDQERLISMTNDLGVDFLEGQLMMSNGFVDTSFFPLSDQTRVASLVNDHRIIYVLEVAKYYDRTTLPIIDQVIDTLSRTLGFAPGFMFVQDVPYFDFLNRVRNEEDKLRSLGLWEVPHPWLNIFVPGSRIQDFHDGVINGLLLNQTSTSGVTLFYPTNRNKWNNRMSTMTPDEDVFYVIGLLQSAGGSQNWQELENLNDKVIQFCENSGIKIKEYLMHYTRKEDWVKHFGPKWDDFLRKKIMFDPKRLLSPGQDIFN.

The first 26 residues, 1-26, serve as a signal peptide directing secretion; the sequence is MTNTLCLSLITLITLFISLTPTLIKS. N-linked (GlcNAc...) asparagine glycosylation is found at Asn39 and Asn58. Positions 60-249 constitute an FAD-binding PCMH-type domain; sequence TDENPGAVLC…TRARIALDHA (190 aa). Positions 104, 106, and 108 each coordinate FAD. His109 bears the Pros-8alpha-FAD histidine mark. FAD is bound by residues Ser110 and Gln114. Asn124 is a glycosylation site (N-linked (GlcNAc...) asparagine). FAD is bound by residues Asp173, Ser178, Ser184, Ile188, and Ile239. Asn411 carries an N-linked (GlcNAc...) asparagine glycan. The FAD site is built by Tyr482, Ser517, and Gln520.

Belongs to the oxygen-dependent FAD-linked oxidoreductase family. FAD serves as cofactor. In terms of tissue distribution, expressed in trichomes and in developing stomata of young growing leaves. Strong expression in stipules and in the root cap, but not detected in the root meristem.

The protein resides in the secreted. It is found in the extracellular space. It catalyses the reaction N(6)-dimethylallyladenine + A + H2O = 3-methyl-2-butenal + adenine + AH2. Catalyzes the oxidation of cytokinins, a family of N(6)-substituted adenine derivatives that are plant hormones, where the substituent is an isopentenyl group. The protein is Cytokinin dehydrogenase 4 (CKX4) of Arabidopsis thaliana (Mouse-ear cress).